The chain runs to 438 residues: Glucose-6-phosphate isomerase (438 aa).

The active-site Proton donor is Glu289. Catalysis depends on residues His310 and Lys424.

Belongs to the GPI family.

The protein localises to the cytoplasm. It carries out the reaction alpha-D-glucose 6-phosphate = beta-D-fructose 6-phosphate. Its pathway is carbohydrate biosynthesis; gluconeogenesis. The protein operates within carbohydrate degradation; glycolysis; D-glyceraldehyde 3-phosphate and glycerone phosphate from D-glucose: step 2/4. Catalyzes the reversible isomerization of glucose-6-phosphate to fructose-6-phosphate. This chain is Glucose-6-phosphate isomerase, found in Oenococcus oeni (strain ATCC BAA-331 / PSU-1).